Reading from the N-terminus, the 476-residue chain is Sulfate adenylyltransferase subunit 1 (476 aa).

One can recognise a tr-type G domain in the interval 24-238; the sequence is KSLLRFLTCG…ELLEYVDIDR (215 aa). The interval 33-40 is G1; the sequence is GSVDDGKS. 33–40 is a GTP binding site; it reads GSVDDGKS. The tract at residues 91–95 is G2; sequence GITID. The segment at 112–115 is G3; the sequence is DTPG. GTP contacts are provided by residues 112–116 and 167–170; these read DTPGH and NKMD. Residues 167–170 form a G4 region; the sequence is NKMD. Residues 205 to 207 are G5; that stretch reads SAL.

The protein belongs to the TRAFAC class translation factor GTPase superfamily. Classic translation factor GTPase family. CysN/NodQ subfamily. Heterodimer composed of CysD, the smaller subunit, and CysN.

It carries out the reaction sulfate + ATP + H(+) = adenosine 5'-phosphosulfate + diphosphate. The protein operates within sulfur metabolism; hydrogen sulfide biosynthesis; sulfite from sulfate: step 1/3. With CysD forms the ATP sulfurylase (ATPS) that catalyzes the adenylation of sulfate producing adenosine 5'-phosphosulfate (APS) and diphosphate, the first enzymatic step in sulfur assimilation pathway. APS synthesis involves the formation of a high-energy phosphoric-sulfuric acid anhydride bond driven by GTP hydrolysis by CysN coupled to ATP hydrolysis by CysD. The polypeptide is Sulfate adenylyltransferase subunit 1 (Vibrio cholerae serotype O1 (strain M66-2)).